Here is a 358-residue protein sequence, read N- to C-terminus: UDP-N-acetylglucosamine--N-acetylmuramyl-(pentapeptide) pyrophosphoryl-undecaprenol N-acetylglucosamine transferase (358 aa).

UDP-N-acetyl-alpha-D-glucosamine-binding positions include 11–13 (TGG), Asn-122, Arg-161, Ser-189, Ile-243, 262–267 (ALTVCE), and Gln-288.

This sequence belongs to the glycosyltransferase 28 family. MurG subfamily.

The protein resides in the cell inner membrane. It catalyses the reaction di-trans,octa-cis-undecaprenyl diphospho-N-acetyl-alpha-D-muramoyl-L-alanyl-D-glutamyl-meso-2,6-diaminopimeloyl-D-alanyl-D-alanine + UDP-N-acetyl-alpha-D-glucosamine = di-trans,octa-cis-undecaprenyl diphospho-[N-acetyl-alpha-D-glucosaminyl-(1-&gt;4)]-N-acetyl-alpha-D-muramoyl-L-alanyl-D-glutamyl-meso-2,6-diaminopimeloyl-D-alanyl-D-alanine + UDP + H(+). Its pathway is cell wall biogenesis; peptidoglycan biosynthesis. Its function is as follows. Cell wall formation. Catalyzes the transfer of a GlcNAc subunit on undecaprenyl-pyrophosphoryl-MurNAc-pentapeptide (lipid intermediate I) to form undecaprenyl-pyrophosphoryl-MurNAc-(pentapeptide)GlcNAc (lipid intermediate II). This chain is UDP-N-acetylglucosamine--N-acetylmuramyl-(pentapeptide) pyrophosphoryl-undecaprenol N-acetylglucosamine transferase, found in Coxiella burnetii (strain Dugway 5J108-111).